The primary structure comprises 67 residues: Bowman-Birk type proteinase inhibitor A4 (67 aa).

Cystine bridges form between cysteine 10–cysteine 29, cysteine 16–cysteine 27, cysteine 36–cysteine 43, and cysteine 40–cysteine 57.

This sequence belongs to the Bowman-Birk serine protease inhibitor family. As to expression, expressed in bulb (at protein level).

Functionally, serine protease inhibitor. Inhibits trypsin (Ki=12nM) and weakly inhibits chymotrypsin with (Ki=460nm). Does not inhibit bacterial subtilisin. This chain is Bowman-Birk type proteinase inhibitor A4, found in Hyacinthus orientalis (Common hyacinth).